The chain runs to 177 residues: Alpha-crystallin A chain (177 aa).

Position 1 is an N-acetylmethionine (Met1). In terms of domain architecture, sHSP spans 52 to 162; it reads VFRNFLDSGI…NWQDRPIPVS (111 aa). Positions 100 and 102 each coordinate Zn(2+). Cys131 and Cys142 are disulfide-bonded. The interval 146-177 is disordered; it reads TRPGDDSNWQDRPIPVSREEKQGTQPEIRADP. O-linked (GlcNAc) serine glycosylation occurs at Ser162. Over residues 162-177 the composition is skewed to basic and acidic residues; the sequence is SREEKQGTQPEIRADP.

Belongs to the small heat shock protein (HSP20) family. As to quaternary structure, heteropolymer composed of three CRYAA and one CRYAB subunits. Inter-subunit bridging via zinc ions enhances stability, which is crucial as there is no protein turn over in the lens. Can also form homodimers and homotetramers (dimers of dimers) which serve as the building blocks of homooligomers.

It localises to the cytoplasm. Its subcellular location is the nucleus. Its function is as follows. Contributes to the transparency and refractive index of the lens. May act as a chaperone, preventing aggregation of various proteins under a wide range of stress conditions. The chain is Alpha-crystallin A chain (cryaa) from Squalus acanthias (Spiny dogfish).